Reading from the N-terminus, the 274-residue chain is tRNA-cytidine(32) 2-sulfurtransferase (274 aa).

A PP-loop motif motif is present at residues 40–45 (SGGKDS). Positions 115, 118, and 206 each coordinate [4Fe-4S] cluster.

This sequence belongs to the TtcA family. Homodimer. Mg(2+) is required as a cofactor. Requires [4Fe-4S] cluster as cofactor.

It is found in the cytoplasm. The catalysed reaction is cytidine(32) in tRNA + S-sulfanyl-L-cysteinyl-[cysteine desulfurase] + AH2 + ATP = 2-thiocytidine(32) in tRNA + L-cysteinyl-[cysteine desulfurase] + A + AMP + diphosphate + H(+). Its pathway is tRNA modification. Catalyzes the ATP-dependent 2-thiolation of cytidine in position 32 of tRNA, to form 2-thiocytidine (s(2)C32). The sulfur atoms are provided by the cysteine/cysteine desulfurase (IscS) system. This Pseudomonas putida (strain W619) protein is tRNA-cytidine(32) 2-sulfurtransferase.